Consider the following 834-residue polypeptide: Glycerol-3-phosphate acyltransferase (834 aa).

The short motif at 304–309 (CHRSHM) is the HXXXXD motif element. A disordered region spans residues 800–834 (SVSMPAETSNQPEAPETPETPETPETPEPEGKTES).

It belongs to the GPAT/DAPAT family.

Its subcellular location is the cell inner membrane. The catalysed reaction is sn-glycerol 3-phosphate + an acyl-CoA = a 1-acyl-sn-glycero-3-phosphate + CoA. It participates in phospholipid metabolism; CDP-diacylglycerol biosynthesis; CDP-diacylglycerol from sn-glycerol 3-phosphate: step 1/3. In Yersinia pseudotuberculosis serotype I (strain IP32953), this protein is Glycerol-3-phosphate acyltransferase.